The chain runs to 466 residues: Asparagine--tRNA ligase (466 aa).

Belongs to the class-II aminoacyl-tRNA synthetase family. As to quaternary structure, homodimer.

Its subcellular location is the cytoplasm. The catalysed reaction is tRNA(Asn) + L-asparagine + ATP = L-asparaginyl-tRNA(Asn) + AMP + diphosphate + H(+). This is Asparagine--tRNA ligase from Syntrophobacter fumaroxidans (strain DSM 10017 / MPOB).